The primary structure comprises 62 residues: MRCLPVFVILLLLIASASSVDAQLKTKDDVPLTSVHDNAKGTQHRRIMAGCCPRFYQCCYPG.

An N-terminal signal peptide occupies residues 1-22; sequence MRCLPVFVILLLLIASASSVDA. Positions 23–44 are excised as a propeptide; the sequence is QLKTKDDVPLTSVHDNAKGTQH. Pro61 bears the Proline amide mark.

Belongs to the conotoxin T superfamily. Contains 2 disulfide bonds that can be either 'C1-C3, C2-C4' or 'C1-C4, C2-C3', since these disulfide connectivities have been observed for conotoxins with cysteine framework V (for examples, see AC P0DQQ7 and AC P81755). In terms of tissue distribution, expressed by the venom duct.

It is found in the secreted. The protein is Conotoxin Sr5.6 of Conus spurius (Alphabet cone).